The following is a 631-amino-acid chain: Probable basic-leucine zipper transcription factor F (631 aa).

Residues 35–62 are a coiled coil; it reads KKNANVFNNFQQQQQQIQQQNKQSNGLI. 3 disordered regions span residues 46-117, 154-207, and 264-406; these read QQQQ…HNNI, LNNS…NNQF, and MLNV…ERHQ. Composition is skewed to low complexity over residues 155–206 and 271–360; these read NNSY…NNNQ and NNAN…GSNN. Residues 328–366 adopt a coiled-coil conformation; that stretch reads NNNNNNSNNISTQINNLNNNINNQNNQLNGSNNGKKKEE. The region spanning 405–468 is the bZIP domain; sequence HQKRQRRLVK…KLIREQLLYL (64 aa). Positions 407–427 are basic motif; that stretch reads KRQRRLVKNREAAQLFRQRQK. Residues 433–440 form a leucine-zipper region; the sequence is LEKKVSDL. A disordered region spans residues 546-631; the sequence is QGNLLGTPIP…PPQQSTPNQR (86 aa). 2 stretches are compositionally biased toward low complexity: residues 563–609 and 618–631; these read SNSG…PNSS and PQNT…PNQR.

The protein belongs to the bZIP family.

The protein resides in the nucleus. Functionally, probable transcriptional regulator. This Dictyostelium discoideum (Social amoeba) protein is Probable basic-leucine zipper transcription factor F (bzpF).